A 446-amino-acid chain; its full sequence is Maltoporin (446 aa).

The first 25 residues, 1-25 (MMITLRKLPLAVAVAAGVMSAQAMA), serve as a signal peptide directing secretion.

It belongs to the porin LamB (TC 1.B.3) family. Homotrimer formed of three 18-stranded antiparallel beta-barrels, containing three independent channels.

It is found in the cell outer membrane. The enzyme catalyses beta-maltose(in) = beta-maltose(out). Involved in the transport of maltose and maltodextrins. This chain is Maltoporin, found in Escherichia coli O157:H7 (strain EC4115 / EHEC).